The primary structure comprises 958 residues: UvrABC system protein A (958 aa).

Residues 1-232 form the ABC transporter 1 domain; sequence MQSKSIKIQG…IETALKLGEG (232 aa). An ATP-binding site is contributed by 33–40; sequence GLSGSGKS. The C4-type zinc finger occupies 252–279; that stretch reads CPICGFSIGELEPRLFSFNSPFGACPSC. 2 ABC transporter domains span residues 315-593 and 604-935; these read QYYP…KYLS and RRKP…GKYL. 639 to 646 is a binding site for ATP; the sequence is GVSGSGKS. A C4-type zinc finger spans residues 738-764; it reads CEACRGDGILKIEMHFLPDVYVPCEVC.

The protein belongs to the ABC transporter superfamily. UvrA family. As to quaternary structure, forms a heterotetramer with UvrB during the search for lesions.

The protein localises to the cytoplasm. Its function is as follows. The UvrABC repair system catalyzes the recognition and processing of DNA lesions. UvrA is an ATPase and a DNA-binding protein. A damage recognition complex composed of 2 UvrA and 2 UvrB subunits scans DNA for abnormalities. When the presence of a lesion has been verified by UvrB, the UvrA molecules dissociate. The chain is UvrABC system protein A from Oceanobacillus iheyensis (strain DSM 14371 / CIP 107618 / JCM 11309 / KCTC 3954 / HTE831).